The sequence spans 557 residues: Ras-specific guanine nucleotide-releasing factor RalGPS2 (557 aa).

The region spanning 49-287 is the Ras-GEF domain; it reads TPEEYAGQIT…YKLSLKIEPG (239 aa). The disordered stretch occupies residues 283–314; that stretch reads KIEPGTSTPRSAASREDLVGPEVGASPQSGRK. S293, S296, S308, and S311 each carry phosphoserine. T326 is subject to Phosphothreonine. The PXXP motif lies at 327 to 330; that stretch reads PPSP. S329 and S343 each carry phosphoserine. Phosphothreonine is present on T361. Residues 368–409 form a disordered region; the sequence is RHLLDDSVMEPHAPSRGQAESSTLSSGISIGSSDGSELSEET. At S374 the chain carries Phosphoserine. A compositionally biased stretch (low complexity) spans 387-403; it reads ESSTLSSGISIGSSDGS. The PH domain maps to 431–543; that stretch reads AVTIQGVLRR…WFKHLSAACQ (113 aa). A required for stimulation of nucleotide exchange by RALA region spans residues 433–557; that stretch reads TIQGVLRRKT…QVPTNLMTFE (125 aa).

Interacts with the SH3 domains of GRB2 and PLCG1. Interacts with RALA.

It is found in the cytoplasm. It localises to the cell membrane. Functionally, guanine nucleotide exchange factor for the small GTPase RALA. May be involved in cytoskeletal organization. May also be involved in the stimulation of transcription in a Ras-independent fashion. This chain is Ras-specific guanine nucleotide-releasing factor RalGPS2 (RALGPS2), found in Macaca fascicularis (Crab-eating macaque).